Here is a 375-residue protein sequence, read N- to C-terminus: Chaperone protein DnaJ (375 aa).

The J domain maps to 6–71 (DYYEVLGVPK…EKRRQYDQFG (66 aa)). The CR-type zinc finger occupies 138 to 220 (GTTKKIDVTL…CYGTGYISSK (83 aa)). Cysteine 151, cysteine 154, cysteine 168, cysteine 171, cysteine 194, cysteine 197, cysteine 208, and cysteine 211 together coordinate Zn(2+). CXXCXGXG motif repeat units lie at residues 151–158 (CSSCHGTG), 168–175 (CSKCGGRG), 194–201 (CPDCHGTG), and 208–215 (CPDCYGTG).

It belongs to the DnaJ family. Homodimer. The cofactor is Zn(2+).

The protein resides in the cytoplasm. Functionally, participates actively in the response to hyperosmotic and heat shock by preventing the aggregation of stress-denatured proteins and by disaggregating proteins, also in an autonomous, DnaK-independent fashion. Unfolded proteins bind initially to DnaJ; upon interaction with the DnaJ-bound protein, DnaK hydrolyzes its bound ATP, resulting in the formation of a stable complex. GrpE releases ADP from DnaK; ATP binding to DnaK triggers the release of the substrate protein, thus completing the reaction cycle. Several rounds of ATP-dependent interactions between DnaJ, DnaK and GrpE are required for fully efficient folding. Also involved, together with DnaK and GrpE, in the DNA replication of plasmids through activation of initiation proteins. In Lachnospira eligens (strain ATCC 27750 / DSM 3376 / VPI C15-48 / C15-B4) (Eubacterium eligens), this protein is Chaperone protein DnaJ.